The primary structure comprises 266 residues: Putative pyruvate, phosphate dikinase regulatory protein (266 aa).

ADP is bound at residue 149-156; it reads GVSRTSKT.

This sequence belongs to the pyruvate, phosphate/water dikinase regulatory protein family. PDRP subfamily.

The catalysed reaction is N(tele)-phospho-L-histidyl/L-threonyl-[pyruvate, phosphate dikinase] + ADP = N(tele)-phospho-L-histidyl/O-phospho-L-threonyl-[pyruvate, phosphate dikinase] + AMP + H(+). It carries out the reaction N(tele)-phospho-L-histidyl/O-phospho-L-threonyl-[pyruvate, phosphate dikinase] + phosphate + H(+) = N(tele)-phospho-L-histidyl/L-threonyl-[pyruvate, phosphate dikinase] + diphosphate. In terms of biological role, bifunctional serine/threonine kinase and phosphorylase involved in the regulation of the pyruvate, phosphate dikinase (PPDK) by catalyzing its phosphorylation/dephosphorylation. This is Putative pyruvate, phosphate dikinase regulatory protein from Geobacillus kaustophilus (strain HTA426).